Reading from the N-terminus, the 407-residue chain is Tyrosine--tRNA ligase (407 aa).

Tyr-35 contacts L-tyrosine. Residues 40-49 carry the 'HIGH' region motif; sequence PTADSLHVGH. Positions 168 and 172 each coordinate L-tyrosine. The 'KMSKS' region motif lies at 228–232; sequence KMGKT. Lys-231 is an ATP binding site. One can recognise an S4 RNA-binding domain in the interval 341–405; sequence NLLVDLLVKC…RGKKNFNRIV (65 aa).

The protein belongs to the class-I aminoacyl-tRNA synthetase family. TyrS type 1 subfamily. Homodimer.

It is found in the cytoplasm. It catalyses the reaction tRNA(Tyr) + L-tyrosine + ATP = L-tyrosyl-tRNA(Tyr) + AMP + diphosphate + H(+). Functionally, catalyzes the attachment of tyrosine to tRNA(Tyr) in a two-step reaction: tyrosine is first activated by ATP to form Tyr-AMP and then transferred to the acceptor end of tRNA(Tyr). This Clostridium botulinum (strain ATCC 19397 / Type A) protein is Tyrosine--tRNA ligase.